A 187-amino-acid chain; its full sequence is Elongation factor P 2 (187 aa).

Belongs to the elongation factor P family.

It is found in the cytoplasm. The protein operates within protein biosynthesis; polypeptide chain elongation. In terms of biological role, involved in peptide bond synthesis. Stimulates efficient translation and peptide-bond synthesis on native or reconstituted 70S ribosomes in vitro. Probably functions indirectly by altering the affinity of the ribosome for aminoacyl-tRNA, thus increasing their reactivity as acceptors for peptidyl transferase. The polypeptide is Elongation factor P 2 (Geobacter sulfurreducens (strain ATCC 51573 / DSM 12127 / PCA)).